A 120-amino-acid polypeptide reads, in one-letter code: Ribosome-binding factor A (120 aa).

This sequence belongs to the RbfA family. Monomer. Binds 30S ribosomal subunits, but not 50S ribosomal subunits or 70S ribosomes.

The protein localises to the cytoplasm. One of several proteins that assist in the late maturation steps of the functional core of the 30S ribosomal subunit. Associates with free 30S ribosomal subunits (but not with 30S subunits that are part of 70S ribosomes or polysomes). Required for efficient processing of 16S rRNA. May interact with the 5'-terminal helix region of 16S rRNA. The polypeptide is Ribosome-binding factor A (Verminephrobacter eiseniae (strain EF01-2)).